The chain runs to 523 residues: Polyamine aminopropyltransferase (523 aa).

7 helical membrane-spanning segments follow: residues 20–40 (VLLA…LALL), 51–71 (IVAT…GALL), 88–108 (AVLG…FAFL), 116–136 (LVLA…VPLL), 164–184 (LGAL…LGMI), 186–206 (GAAV…IFLL), and 215–235 (LVTA…LLVH). The interval 203–478 (IFLLRHVVSG…APTPAVPSTA (276 aa)) is spermidine synthase. The PABS domain maps to 231–465 (TLLVHSHDIE…GDWGFALARL (235 aa)). Gln-261 provides a ligand contact to S-methyl-5'-thioadenosine. Asp-313 provides a ligand contact to spermidine. Residues Glu-333 and 365–366 (DA) contribute to the S-methyl-5'-thioadenosine site. Asp-386 functions as the Proton acceptor in the catalytic mechanism.

This sequence belongs to the spermidine/spermine synthase family. As to quaternary structure, homodimer or homotetramer.

The protein localises to the cell membrane. The catalysed reaction is S-adenosyl 3-(methylsulfanyl)propylamine + putrescine = S-methyl-5'-thioadenosine + spermidine + H(+). It participates in amine and polyamine biosynthesis; spermidine biosynthesis; spermidine from putrescine: step 1/1. Catalyzes the irreversible transfer of a propylamine group from the amino donor S-adenosylmethioninamine (decarboxy-AdoMet) to putrescine (1,4-diaminobutane) to yield spermidine. The sequence is that of Polyamine aminopropyltransferase from Mycobacterium bovis (strain ATCC BAA-935 / AF2122/97).